We begin with the raw amino-acid sequence, 494 residues long: Amidophosphoribosyltransferase (494 aa).

The propeptide occupies 1-10 (MSNYSGLNEE). Residue C11 is the Nucleophile of the active site. A Glutamine amidotransferase type-2 domain is found at 11-231 (CGVFGIWNHP…AGEYVVITDE (221 aa)). Residues S294, D356, and D357 each contribute to the Mg(2+) site.

This sequence in the C-terminal section; belongs to the purine/pyrimidine phosphoribosyltransferase family. Requires Mg(2+) as cofactor.

The enzyme catalyses 5-phospho-beta-D-ribosylamine + L-glutamate + diphosphate = 5-phospho-alpha-D-ribose 1-diphosphate + L-glutamine + H2O. It participates in purine metabolism; IMP biosynthesis via de novo pathway; N(1)-(5-phospho-D-ribosyl)glycinamide from 5-phospho-alpha-D-ribose 1-diphosphate: step 1/2. Functionally, catalyzes the formation of phosphoribosylamine from phosphoribosylpyrophosphate (PRPP) and glutamine. The protein is Amidophosphoribosyltransferase of Staphylococcus epidermidis (strain ATCC 35984 / DSM 28319 / BCRC 17069 / CCUG 31568 / BM 3577 / RP62A).